The sequence spans 262 residues: Phosphonates import ATP-binding protein PhnC (262 aa).

Residues 5–253 enclose the ABC transporter domain; the sequence is IRVEKLAKTF…RFDHLYRSIN (249 aa). Residue 37-44 participates in ATP binding; it reads GPSGSGKS.

Belongs to the ABC transporter superfamily. Phosphonates importer (TC 3.A.1.9.1) family. As to quaternary structure, the complex is composed of two ATP-binding proteins (PhnC), two transmembrane proteins (PhnE) and a solute-binding protein (PhnD).

The protein resides in the cell inner membrane. It carries out the reaction phosphonate(out) + ATP + H2O = phosphonate(in) + ADP + phosphate + H(+). Functionally, part of the ABC transporter complex PhnCDE involved in phosphonates import. Responsible for energy coupling to the transport system. This is Phosphonates import ATP-binding protein PhnC from Escherichia coli (strain UTI89 / UPEC).